We begin with the raw amino-acid sequence, 270 residues long: ATP synthase subunit a (270 aa).

Transmembrane regions (helical) follow at residues 40-60, 98-118, 143-163, 208-228, and 239-259; these read IDSLFFSWFTGLIFLGIFYAV, IAPLALTIFCWVFLMNLMDLV, DVNITMAMALGVFALMIYYSI, LFGNMFAGEVVFILCAAMLPW, and AIFHILVILIQAFVFMMLTIV.

Belongs to the ATPase A chain family. As to quaternary structure, F-type ATPases have 2 components, CF(1) - the catalytic core - and CF(0) - the membrane proton channel. CF(1) has five subunits: alpha(3), beta(3), gamma(1), delta(1), epsilon(1). CF(0) has three main subunits: a(1), b(2) and c(9-12). The alpha and beta chains form an alternating ring which encloses part of the gamma chain. CF(1) is attached to CF(0) by a central stalk formed by the gamma and epsilon chains, while a peripheral stalk is formed by the delta and b chains.

It is found in the cell inner membrane. Key component of the proton channel; it plays a direct role in the translocation of protons across the membrane. This Vibrio vulnificus (strain CMCP6) protein is ATP synthase subunit a.